The primary structure comprises 478 residues: UDP-N-acetylmuramate--L-alanine ligase (478 aa).

This sequence belongs to the MurCDEF family.

The protein resides in the cytoplasm. It carries out the reaction UDP-N-acetyl-alpha-D-muramate + L-alanine + ATP = UDP-N-acetyl-alpha-D-muramoyl-L-alanine + ADP + phosphate + H(+). The protein operates within cell wall biogenesis; peptidoglycan biosynthesis. In terms of biological role, cell wall formation. The polypeptide is UDP-N-acetylmuramate--L-alanine ligase (murC) (Synechococcus elongatus (strain ATCC 33912 / PCC 7942 / FACHB-805) (Anacystis nidulans R2)).